The following is a 195-amino-acid chain: CASP-like protein 1E2 (195 aa).

Residues 1–29 (MEVESKTSFGGMESKSKEVKVVTGGKLRP) are Cytoplasmic-facing. The chain crosses the membrane as a helical span at residues 30–50 (FDLVLRVVALALTLVAAVLLG). The Extracellular segment spans residues 51–82 (VDKQTKVVSLQLLPTLPPMDVPVTAKWRYLSA). Residues 83–103 (FVYFVVSNAIACSYAALSLLL) form a helical membrane-spanning segment. Topologically, residues 104-122 (SVGNSKGNKGLGLAITVMD) are cytoplasmic. Residues 123–143 (LVMVALLFSSNGAAGAIGLMG) traverse the membrane as a helical segment. The Extracellular segment spans residues 144 to 165 (YEGNSRVRWGKVCNVFGKFCNQ). The chain crosses the membrane as a helical span at residues 166–186 (VAVALGLSFFGGLAFFLLVVM). The Cytoplasmic portion of the chain corresponds to 187–195 (AAFALNKRH).

The protein belongs to the Casparian strip membrane proteins (CASP) family. Homodimer and heterodimers.

The protein localises to the cell membrane. This chain is CASP-like protein 1E2, found in Vitis vinifera (Grape).